The primary structure comprises 191 residues: Thymidylate kinase (191 aa).

7–14 provides a ligand contact to ATP; that stretch reads GIDTAGKS.

The protein belongs to the thymidylate kinase family.

The catalysed reaction is dTMP + ATP = dTDP + ADP. Its function is as follows. Phosphorylation of dTMP to form dTDP in both de novo and salvage pathways of dTTP synthesis. The sequence is that of Thymidylate kinase from Sulfurimonas denitrificans (strain ATCC 33889 / DSM 1251) (Thiomicrospira denitrificans (strain ATCC 33889 / DSM 1251)).